Consider the following 95-residue polypeptide: Co-chaperonin GroES (95 aa).

It belongs to the GroES chaperonin family. As to quaternary structure, heptamer of 7 subunits arranged in a ring. Interacts with the chaperonin GroEL.

The protein resides in the cytoplasm. Its function is as follows. Together with the chaperonin GroEL, plays an essential role in assisting protein folding. The GroEL-GroES system forms a nano-cage that allows encapsulation of the non-native substrate proteins and provides a physical environment optimized to promote and accelerate protein folding. GroES binds to the apical surface of the GroEL ring, thereby capping the opening of the GroEL channel. The polypeptide is Co-chaperonin GroES (Stenotrophomonas maltophilia (strain K279a)).